An 86-amino-acid polypeptide reads, in one-letter code: Evasin-3 (86 aa).

An N-terminal signal peptide occupies residues 1–20 (MRALLARLLLCVLVVSDSKG). 3 disulfide bridges follow: Cys-42-Cys-57, Cys-46-Cys-59, and Cys-53-Cys-70. N-linked (GlcNAc...) asparagine glycosylation is present at Asn-45. The N-linked (GlcNAc...) asparagine glycan is linked to Asn-76.

As to quaternary structure, monomer.

The protein resides in the secreted. Salivary chemokine-binding protein which shows chemokine neutralizing activity and binds to host chemokines CXCL1, CXCL2, CXCL3, CXCL5, CXCL6 and CXCL8. Binds to CXCL8 with 1:1 stoichiometry. Disrupts CXCL8 homodimer formation, disrupts the glycosaminoglycan-binding site of CXCL8 and inhibits the interaction of CXCL8 with CXCR2. This is Evasin-3 from Rhipicephalus sanguineus (Brown dog tick).